A 436-amino-acid chain; its full sequence is Hydrolyase ccsE (436 aa).

The active-site Nucleophile is the serine 249.

Belongs to the AB hydrolase superfamily. FUS2 hydrolase family. Homodimer.

It functions in the pathway mycotoxin biosynthesis. Its function is as follows. Hydrolyase; part of the gene cluster that mediates the biosynthesis of a family of the mycotoxins cytochalasins E and K. The hybrid PKS-NRPS synthetase ccsA and the enoyl reductase ccsC are responsible for fusion of phenylalanine with an octaketide backbone and subsequent release of the stable tetramic acid precursor. The polyketide synthase module (PKS) of the PKS-NRPS ccsA is responsible for the synthesis of the octaketide backbone. The downstream nonribosomal peptide synthetase (NRPS) amidates the carboxyl end of the octaketide with a phenylalanine. A reductase-like domain (R) at the C-terminus catalyzes the reductive release of the polyketide-amino acid intermediate. Because ccsA lacks a designated enoylreductase (ER) domain, the required activity is provided the enoyl reductase ccsC. Upon formation of the 11-membered carbocycle-fused perhydroisoindolone intermediate, a number of oxidative steps are required to afford the final cytochalasin E and K, including two hydroxylations at C17 and C18, one alcohol oxidation at C17, one epoxidation at C6 and C7 and two Baeyer-Villiger oxidations. The oxidative modification at C17, C18 and the C6-C7 epoxidation are likely to be catalyzed by the two cytochrome P450 oxygenases ccsD and ccsG. CcsD may be responsible for the epoxidation of the C6-C7 double bond. CcsG may be responsible for the successive oxidative modifications at C17 and C18. The double Baeyer-Villiger oxidations of ketocytochalasin to precytochalasin and cytochalasin Z(16) are among the final steps leading to cytochalasin E and K and are catalyzed by ccsB. The first oxygen insertion step follows that of the classic BVMO mechanism, generating the ester precytochalasin. Release of precytochalasin into an aqueous environment can generate the shunt product iso-precytochalasin through spontaneous isomerization. Alternatively, precytochalasin can undergo further oxidation by ccsB to yield the in-line carbonate-containing cytochalasin Z(16). Cytochalasin Z(16) is a precursor to cytochalasin E and cytochalasin K, whereas iso-precytochalasin is a precursor to cytochalasin Z(17) and rosellichalasin. The hydrolyase ccsE may catalyze hydrolysis of epoxide bond in cytochalasin E to afford cytochalasin K. The function of ccsF has not been assigned but it may play a role in post-PKS-NRPS biosynthetic step, resistance or transport of cytochalasins and related PKS-NRPS products. The sequence is that of Hydrolyase ccsE from Aspergillus clavatus (strain ATCC 1007 / CBS 513.65 / DSM 816 / NCTC 3887 / NRRL 1 / QM 1276 / 107).